The following is a 210-amino-acid chain: Small ribosomal subunit protein uS4 (210 aa).

In terms of domain architecture, S4 RNA-binding spans 99–161; the sequence is RRLDSVIYRM…SKNNATILSA (63 aa).

The protein belongs to the universal ribosomal protein uS4 family. As to quaternary structure, part of the 30S ribosomal subunit. Contacts protein S5. The interaction surface between S4 and S5 is involved in control of translational fidelity.

Functionally, one of the primary rRNA binding proteins, it binds directly to 16S rRNA where it nucleates assembly of the body of the 30S subunit. In terms of biological role, with S5 and S12 plays an important role in translational accuracy. The sequence is that of Small ribosomal subunit protein uS4 from Solibacter usitatus (strain Ellin6076).